Reading from the N-terminus, the 247-residue chain is MILQPGAWAVADILYEGKAKIIYPTPDPAIVLAVFKDDATAFNAQKRGTISGKGAVNATVSAKLFLLLERSGVPTHYIDQPAANQLLFRRLKMIPLEVVVRNIVAGSLAKRTGLASGTVLGEAIVEFYYKNDALGDPLLNDEHILKVLTTVDALQLAELRRSALQVNAILSAFYRECGIRLVDFKLEYGYDGAGQLQLGDELSPDNCRLWTLEEDRILDKDRFRFDMGEVEGAYQEVLARVIAKAGP.

The protein belongs to the SAICAR synthetase family.

It carries out the reaction 5-amino-1-(5-phospho-D-ribosyl)imidazole-4-carboxylate + L-aspartate + ATP = (2S)-2-[5-amino-1-(5-phospho-beta-D-ribosyl)imidazole-4-carboxamido]succinate + ADP + phosphate + 2 H(+). The protein operates within purine metabolism; IMP biosynthesis via de novo pathway; 5-amino-1-(5-phospho-D-ribosyl)imidazole-4-carboxamide from 5-amino-1-(5-phospho-D-ribosyl)imidazole-4-carboxylate: step 1/2. The polypeptide is Phosphoribosylaminoimidazole-succinocarboxamide synthase (Gloeobacter violaceus (strain ATCC 29082 / PCC 7421)).